Here is a 567-residue protein sequence, read N- to C-terminus: Dynein, 70 kDa intermediate chain, flagellar outer arm (567 aa).

4 WD repeats span residues 214 to 254 (VPTS…GPVE), 261 to 302 (SHRD…ECVE), 360 to 399 (GHHG…KTPI), and 404 to 444 (YHPT…NEPT).

The protein belongs to the dynein intermediate chain family. As to quaternary structure, consists of at least 3 heavy chains (alpha, beta and gamma), 2 intermediate chains and 8 light chains.

It localises to the cytoplasm. Its subcellular location is the cytoskeleton. It is found in the flagellum axoneme. May play a role in regulating dynein heavy chain (DHC) activity. May function in holding IC78 to the DHC, or in stabilizing the entire dynein complex. This chain is Dynein, 70 kDa intermediate chain, flagellar outer arm (ODA6), found in Chlamydomonas reinhardtii (Chlamydomonas smithii).